Reading from the N-terminus, the 219-residue chain is Ribose-5-phosphate isomerase A (219 aa).

Substrate contacts are provided by residues 28–31, 81–84, and 94–97; these read TGST, DGAD, and KGGG. Glu-103 serves as the catalytic Proton acceptor. Lys-121 lines the substrate pocket.

This sequence belongs to the ribose 5-phosphate isomerase family. As to quaternary structure, homodimer.

The enzyme catalyses aldehydo-D-ribose 5-phosphate = D-ribulose 5-phosphate. It participates in carbohydrate degradation; pentose phosphate pathway; D-ribose 5-phosphate from D-ribulose 5-phosphate (non-oxidative stage): step 1/1. Functionally, catalyzes the reversible conversion of ribose-5-phosphate to ribulose 5-phosphate. The polypeptide is Ribose-5-phosphate isomerase A (Pectobacterium carotovorum subsp. carotovorum (strain PC1)).